We begin with the raw amino-acid sequence, 371 residues long: Uroporphyrinogen decarboxylase (371 aa).

The span at 1 to 14 (MARWATMSTETTGT) shows a compositional bias: polar residues. The tract at residues 1–30 (MARWATMSTETTGTGARDEGPRPGDPADSP) is disordered. Residues 49–53 (RQAGR), D98, Y173, S228, and H342 contribute to the substrate site.

This sequence belongs to the uroporphyrinogen decarboxylase family. As to quaternary structure, homodimer.

The protein localises to the cytoplasm. It carries out the reaction uroporphyrinogen III + 4 H(+) = coproporphyrinogen III + 4 CO2. Its pathway is porphyrin-containing compound metabolism; protoporphyrin-IX biosynthesis; coproporphyrinogen-III from 5-aminolevulinate: step 4/4. Functionally, catalyzes the decarboxylation of four acetate groups of uroporphyrinogen-III to yield coproporphyrinogen-III. In Salinispora tropica (strain ATCC BAA-916 / DSM 44818 / JCM 13857 / NBRC 105044 / CNB-440), this protein is Uroporphyrinogen decarboxylase.